Here is a 459-residue protein sequence, read N- to C-terminus: Kelch-like protein terF (459 aa).

Kelch repeat units lie at residues 92-144 (STVV…LVGD), 145-196 (EIFV…VVDG), 198-248 (IYYL…TVVV), 251-304 (TIYL…IYRD), 306-354 (LYIL…TIGS), and 355-405 (LIFT…VYKG).

Its pathway is secondary metabolite biosynthesis. In terms of biological role, kelch-like protein; part of the gene cluster that mediates the biosynthesis of terrein, a fungal metabolite with ecological, antimicrobial, antiproliferative, and antioxidative activities. The first step in the pathway is performed by the polyketide synthase terA that produces 4-hydroxy-6-methylpyranon (4-HMP), orsellinic acid (OA), and 2,3-dehydro-6-hydroxymellein (2,3-dehydro-6-HM) by condensing acetyl-CoA with two, three, or four malonyl-CoA units, respectively. 4-HMP and OA are not pathway intermediates, but are rather shunt or side products. 2,3-dehydro-6-HM is further converted to 6-hydroxymellein (6-HM) by the 6-hydroxymellein synthase terB. The monooxygenases terC and terD, the multicopper oxidase terE and the Kelch-like protein terF are then involved in the transformation of 6-HM to terrein. Even if they are co-regulated with the other terrein cluster genes, terH and terI seem to be dispensable for terrein production; whereas one or both of the 2 transporters terG and terJ are probably required for efficient secretion of metabolites. The protein is Kelch-like protein terF of Aspergillus terreus (strain NIH 2624 / FGSC A1156).